The primary structure comprises 127 residues: Large ribosomal subunit protein bL20 (127 aa).

It belongs to the bacterial ribosomal protein bL20 family.

Binds directly to 23S ribosomal RNA and is necessary for the in vitro assembly process of the 50S ribosomal subunit. It is not involved in the protein synthesizing functions of that subunit. This is Large ribosomal subunit protein bL20 from Opitutus terrae (strain DSM 11246 / JCM 15787 / PB90-1).